A 242-amino-acid chain; its full sequence is MVEYYDVLGVQRNASPEDIKKAYRKLALKWHPDKNPDNKDEAERRFKEVAEAYEVLSDSKKRDIYDKYGKEGLTGGGGGSHFDNPYEFGFTFRSPDDVFRDFFGGRDPFSFDLFADDPFDDFFGRRGHRANRSRPGGSFLSTFGGFPAFGPTFSPFDSGFSSSFGSFGGHGGFSSFSSSSFGGSGMGNFRSVSTSTKVVNGRRVTTKRIVENGQERIEVEEDGQLKSLTINGKEQLLRLDNK.

The J domain maps to 3–69 (EYYDVLGVQR…KKRDIYDKYG (67 aa)).

In terms of assembly, homooligomer.

Its subcellular location is the cytoplasm. It is found in the perinuclear region. It localises to the nucleus. Its function is as follows. Has a stimulatory effect on the ATPase activity of HSP70 in a dose-dependent and time-dependent manner and hence acts as a co-chaperone of HSP70. Plays an indispensable role in the organization of KRT8/KRT18 filaments. Acts as an endogenous molecular chaperone for neuronal proteins including huntingtin. Suppresses aggregation and toxicity of polyglutamine-containing, aggregation-prone proteins. Also reduces cellular toxicity and caspase-3 activity. This chain is DnaJ homolog subfamily B member 6, found in Xenopus tropicalis (Western clawed frog).